The following is a 317-amino-acid chain: uncharacterized protein (317 aa).

Transmembrane regions (helical) follow at residues 18-38, 58-78, 92-112, 130-150, 165-185, 202-222, and 253-273; these read WWII…LIII, IIFG…GFIF, FLGH…WWSV, LFAT…AFGV, QPLS…KGEL, LAFL…LSTV, and LWGG…LMVN.

Belongs to the CbiQ family.

It is found in the cell membrane. This is an uncharacterized protein from Mycoplasma pneumoniae (strain ATCC 29342 / M129 / Subtype 1) (Mycoplasmoides pneumoniae).